Consider the following 180-residue polypeptide: Large ribosomal subunit protein uL5 (180 aa).

This sequence belongs to the universal ribosomal protein uL5 family. In terms of assembly, part of the 50S ribosomal subunit; part of the 5S rRNA/L5/L18/L25 subcomplex. Contacts the 5S rRNA and the P site tRNA. Forms a bridge to the 30S subunit in the 70S ribosome.

Its function is as follows. This is one of the proteins that bind and probably mediate the attachment of the 5S RNA into the large ribosomal subunit, where it forms part of the central protuberance. In the 70S ribosome it contacts protein S13 of the 30S subunit (bridge B1b), connecting the 2 subunits; this bridge is implicated in subunit movement. Contacts the P site tRNA; the 5S rRNA and some of its associated proteins might help stabilize positioning of ribosome-bound tRNAs. The chain is Large ribosomal subunit protein uL5 from Polynucleobacter asymbioticus (strain DSM 18221 / CIP 109841 / QLW-P1DMWA-1) (Polynucleobacter necessarius subsp. asymbioticus).